The chain runs to 616 residues: Chaperone protein HscA (616 aa).

This sequence belongs to the heat shock protein 70 family.

Chaperone involved in the maturation of iron-sulfur cluster-containing proteins. Has a low intrinsic ATPase activity which is markedly stimulated by HscB. Involved in the maturation of IscU. The sequence is that of Chaperone protein HscA from Serratia proteamaculans (strain 568).